Consider the following 123-residue polypeptide: Histone H1-like protein HC1 (123 aa).

Positions 54-123 (IKAEKSGLLK…KPSKARGFRK (70 aa)) are disordered. Over residues 61-75 (LLKRKPSTKAPAKVK) the composition is skewed to basic residues. Residues 85–102 (KSSAAAAKTSKAVKASKP) show a composition bias toward low complexity. The segment covering 103 to 123 (ASKKTAAKKVKKPSKARGFRK) has biased composition (basic residues).

The protein belongs to the histone H1/H5 family. HCT subfamily.

Might have a role analogous to that of eukaryotic histone proteins. This is Histone H1-like protein HC1 (hctA) from Chlamydia pneumoniae (Chlamydophila pneumoniae).